The chain runs to 409 residues: Pyrophosphate--fructose 6-phosphate 1-phosphotransferase (409 aa).

Residue glycine 14 coordinates diphosphate. Aspartate 123 lines the Mg(2+) pocket. Substrate is bound by residues 151 to 153 (TVD), 196 to 198 (MGR), glutamate 268, and 325 to 328 (YFAR). The Proton acceptor role is filled by aspartate 153.

This sequence belongs to the phosphofructokinase type A (PFKA) family. PPi-dependent PFK group II subfamily. Clade 'P' sub-subfamily. Homodimer. It depends on Mg(2+) as a cofactor.

The protein resides in the cytoplasm. The catalysed reaction is beta-D-fructose 6-phosphate + diphosphate = beta-D-fructose 1,6-bisphosphate + phosphate + H(+). Its pathway is carbohydrate degradation; glycolysis; D-glyceraldehyde 3-phosphate and glycerone phosphate from D-glucose: step 3/4. Non-allosteric. Functionally, catalyzes the phosphorylation of D-fructose 6-phosphate, the first committing step of glycolysis. Uses inorganic phosphate (PPi) as phosphoryl donor instead of ATP like common ATP-dependent phosphofructokinases (ATP-PFKs), which renders the reaction reversible, and can thus function both in glycolysis and gluconeogenesis. Consistently, PPi-PFK can replace the enzymes of both the forward (ATP-PFK) and reverse (fructose-bisphosphatase (FBPase)) reactions. This chain is Pyrophosphate--fructose 6-phosphate 1-phosphotransferase, found in Methylomonas methanica.